Here is an 84-residue protein sequence, read N- to C-terminus: MIYAGQIQNQQYAQYANRTIGHKQDYAGTEKISYVPFQRVYKELEKQQENQTAAERKVNEMKRKRSLYKRLREKGMGTYINRYV.

This is an uncharacterized protein from Bacillus subtilis (strain 168).